Here is a 154-residue protein sequence, read N- to C-terminus: Ribosome maturation factor RimP (154 aa).

It belongs to the RimP family.

Its subcellular location is the cytoplasm. Functionally, required for maturation of 30S ribosomal subunits. The protein is Ribosome maturation factor RimP of Ruthia magnifica subsp. Calyptogena magnifica.